The following is a 360-amino-acid chain: Mitogen-activated protein kinase 1 (360 aa).

A2 carries the post-translational modification N-acetylalanine. In terms of domain architecture, Protein kinase spans 25–313 (YTNLSYIGEG…VEQALAHPYL (289 aa)). S29 carries the phosphoserine; by SGK1 modification. Residues 31 to 39 (IGEGAYGMV) and K54 contribute to the ATP site. D149 acts as the Proton acceptor in catalysis. Position 185 is a phosphothreonine; by MAP2K1 and MAP2K2 (T185). The TXY signature appears at 185 to 187 (TEY). A Phosphotyrosine; by MAP2K1 and MAP2K2 modification is found at Y187. T190 bears the Phosphothreonine; by autocatalysis mark. Residues S246, S248, and S284 each carry the phosphoserine modification.

Belongs to the protein kinase superfamily. CMGC Ser/Thr protein kinase family. MAP kinase subfamily. In terms of assembly, binds both upstream activators and downstream substrates in multimolecular complexes. Interacts with ADAM15, ARHGEF2, ARRB2, DAPK1 (via death domain), HSF4, IER3, IPO7, MKNK2, MORG1, NISCH, PEA15, SGK1, and isoform 1 of NEK2. Interacts (via phosphorylated form) with TPR (via C-terminal region and phosphorylated form); the interaction requires dimerization of MAPK1/ERK2 and increases following EGF stimulation. Interacts with MAP2K1. Interacts with DUSP6. Interacts (phosphorylated form) with CAV2 ('Tyr-19'-phosphorylated form); the interaction, promoted by insulin, leads to nuclear location and MAPK1 activation. MKNK2 isoform 1 binding prevents from dephosphorylation and inactivation. Interacts with DCC. The phosphorylated form interacts with PML. Interacts with STYX. Interacts with CDK2AP2. Interacts with CAVIN4. Interacts with DUSP7; the interaction enhances DUSP7 phosphatase activity. Interacts with GIT1; this interaction is necessary for MAPK1 localization to focal adhesions. Interacts with ZNF263. Interacts with phosphoglycerate kinase PGK1; the interaction is direct, occurs under hypoxic conditions, and promotes interaction between PGK1 and PIN1. Mg(2+) is required as a cofactor. In terms of processing, dually phosphorylated on Thr-185 and Tyr-187, which activates the enzyme. Phosphorylated upon FLT3 and KIT signaling. Phosphorylation on Ser-29 by SGK1 results in its activation by enhancing its interaction with MAP2K1/MEK1 and MAP2K2/MEK2. Phosphorylation at Ser-246 and Ser-248 as well as autophosphorylation at Thr-190 promote nuclear localization. Ligand-activated ALK induces tyrosine phosphorylation. Dephosphorylated by PTPRJ at Tyr-187. Dephosphorylated by DUSP1 and DUSP2 at Thr-185 and Tyr-187. ISGylated. Post-translationally, ubiquitinated by TRIM15 via 'Lys-63'-linked ubiquitination; leading to activation. Deubiquitinated by CYLD.

It is found in the nucleus. Its subcellular location is the cytoplasm. It localises to the cytoskeleton. The protein localises to the microtubule organizing center. The protein resides in the centrosome. It is found in the spindle. Its subcellular location is the membrane. It localises to the caveola. The protein localises to the cell junction. The protein resides in the focal adhesion. The catalysed reaction is L-seryl-[protein] + ATP = O-phospho-L-seryl-[protein] + ADP + H(+). It carries out the reaction L-threonyl-[protein] + ATP = O-phospho-L-threonyl-[protein] + ADP + H(+). Phosphorylated by MAP2K1/MEK1 and MAP2K2/MEK2 on Thr-185 and Tyr-187 in response to external stimuli like insulin or NGF. Both phosphorylations are required for activity. This phosphorylation causes dramatic conformational changes, which enable full activation and interaction of MAPK1/ERK2 with its substrates. Phosphorylation on Ser-29 by SGK1 results in its activation by enhancing its interaction with MAP2K1/MEK1 and MAP2K2/MEK2. Dephosphorylated and inactivated by DUSP1, DUSP3, DUSP6 and DUSP9. Inactivated by pyrimidylpyrrole inhibitors. Functionally, serine/threonine kinase which acts as an essential component of the MAP kinase signal transduction pathway. MAPK1/ERK2 and MAPK3/ERK1 are the 2 MAPKs which play an important role in the MAPK/ERK cascade. They participate also in a signaling cascade initiated by activated KIT and KITLG/SCF. Depending on the cellular context, the MAPK/ERK cascade mediates diverse biological functions such as cell growth, adhesion, survival and differentiation through the regulation of transcription, translation, cytoskeletal rearrangements. The MAPK/ERK cascade also plays a role in initiation and regulation of meiosis, mitosis, and postmitotic functions in differentiated cells by phosphorylating a number of transcription factors. About 160 substrates have already been discovered for ERKs. Many of these substrates are localized in the nucleus, and seem to participate in the regulation of transcription upon stimulation. However, other substrates are found in the cytosol as well as in other cellular organelles, and those are responsible for processes such as translation, mitosis and apoptosis. Moreover, the MAPK/ERK cascade is also involved in the regulation of the endosomal dynamics, including lysosome processing and endosome cycling through the perinuclear recycling compartment (PNRC); as well as in the fragmentation of the Golgi apparatus during mitosis. The substrates include transcription factors (such as ATF2, BCL6, ELK1, ERF, FOS, HSF4 or SPZ1), cytoskeletal elements (such as CANX, CTTN, GJA1, MAP2, MAPT, PXN, SORBS3 or STMN1), regulators of apoptosis (such as BAD, BTG2, CASP9, DAPK1, IER3, MCL1 or PPARG), regulators of translation (such as EIF4EBP1 and FXR1) and a variety of other signaling-related molecules (like ARHGEF2, DCC, FRS2 or GRB10). Protein kinases (such as RAF1, RPS6KA1/RSK1, RPS6KA3/RSK2, RPS6KA2/RSK3, RPS6KA6/RSK4, SYK, MKNK1/MNK1, MKNK2/MNK2, RPS6KA5/MSK1, RPS6KA4/MSK2, MAPKAPK3 or MAPKAPK5) and phosphatases (such as DUSP1, DUSP4, DUSP6 or DUSP16) are other substrates which enable the propagation the MAPK/ERK signal to additional cytosolic and nuclear targets, thereby extending the specificity of the cascade. Mediates phosphorylation of TPR in response to EGF stimulation. May play a role in the spindle assembly checkpoint. Phosphorylates PML and promotes its interaction with PIN1, leading to PML degradation. Phosphorylates CDK2AP2. Phosphorylates phosphoglycerate kinase PGK1 under hypoxic conditions to promote its targeting to the mitochondrion and suppress the formation of acetyl-coenzyme A from pyruvate. In terms of biological role, acts as a transcriptional repressor. Binds to a [GC]AAA[GC] consensus sequence. Repress the expression of interferon gamma-induced genes. Seems to bind to the promoter of CCL5, DMP1, IFIH1, IFITM1, IRF7, IRF9, LAMP3, OAS1, OAS2, OAS3 and STAT1. Transcriptional activity is independent of kinase activity. This Bos taurus (Bovine) protein is Mitogen-activated protein kinase 1.